Reading from the N-terminus, the 305-residue chain is Oxidoreductase swnR (305 aa).

This sequence belongs to the NmrA-type oxidoreductase family. Isoflavone reductase subfamily.

It catalyses the reaction L-pipecolate + O2 = L-1-piperideine-6-carboxylate + H2O2 + H(+). The protein operates within mycotoxin biosynthesis. Its function is as follows. Oxidoreductase; part of the gene cluster that mediates the biosynthesis of swainsonine (SW), a cytotoxic fungal alkaloid and a potential cancer therapy drug. Swainsonine production occurs via a multibranched pathway and is dispensable for fungal colonization of plants and infection of insect hosts. The first step of swainsonine biosynthesis is the production of the precursor pipecolic acid (PA) via conversion of L-lysine (Lys) to 1-piperideine-6-carboxylate (P6C) by the aminotransferase swnA, the latter being further reduced to PA by the reductase swnR. The PKS-NRPS hybrid synthetase swnK uptakes and condensates PA and malonyl-CoA with and without skipping of the ketoreductase (KR) domain in order to produce 3 intermediates, 1-oxoindolizidine, (1S)-1-hydroxyindolizin, and (1R)-1-hydroxyindolizine; with the transisomer (1S)-1-hydroxyindolizin being predominant. The terminal thioester reductase (TE) domain of swnK is involved in reduction of the thioester bond to release the intermediate aldehydes. The oxidoreductase swnN could contribute to the reduction of 1-oxoindolizidine to (1S)-1-hydroxyindolizin and (1R)-1-hydroxyindolizine, contributing to the major route of SW production. The dioxygenase swnH2 would be responsible for the oxidization of (1R)-1-hydroxyindolizine into (1R,2S)-1,2-dihydroxyindolizine and of (1S)-1-hydroxyindolizin to yield both (1R,2S)-1,2-dihydroxyindolizine and (1S,2S)-1,2-dihydroxyindolizine. The dioxygenase swnH1 then performs the conversion of the 1,2-dihydroxyindolizine epimers to SW. The protein is Oxidoreductase swnR of Arthroderma benhamiae (strain ATCC MYA-4681 / CBS 112371) (Trichophyton mentagrophytes).